Here is a 214-residue protein sequence, read N- to C-terminus: Probable nicotinate-nucleotide adenylyltransferase (214 aa).

Belongs to the NadD family.

The enzyme catalyses nicotinate beta-D-ribonucleotide + ATP + H(+) = deamido-NAD(+) + diphosphate. Its pathway is cofactor biosynthesis; NAD(+) biosynthesis; deamido-NAD(+) from nicotinate D-ribonucleotide: step 1/1. Catalyzes the reversible adenylation of nicotinate mononucleotide (NaMN) to nicotinic acid adenine dinucleotide (NaAD). The polypeptide is Probable nicotinate-nucleotide adenylyltransferase (Mycobacterium tuberculosis (strain ATCC 25177 / H37Ra)).